The following is a 261-amino-acid chain: Phosphate import ATP-binding protein PstB 1 (261 aa).

Residues 8–256 form the ABC transporter domain; it reads IKVNNLSFYY…PHDSRTREYV (249 aa). Residue 40-47 participates in ATP binding; it reads GPSGCGKS.

Belongs to the ABC transporter superfamily. Phosphate importer (TC 3.A.1.7) family. The complex is composed of two ATP-binding proteins (PstB), two transmembrane proteins (PstC and PstA) and a solute-binding protein (PstS).

It localises to the cell inner membrane. It carries out the reaction phosphate(out) + ATP + H2O = ADP + 2 phosphate(in) + H(+). Part of the ABC transporter complex PstSACB involved in phosphate import. Responsible for energy coupling to the transport system. The sequence is that of Phosphate import ATP-binding protein PstB 1 from Nostoc sp. (strain PCC 7120 / SAG 25.82 / UTEX 2576).